Reading from the N-terminus, the 154-residue chain is Interleukin-2 (154 aa).

An N-terminal signal peptide occupies residues 1–20 (MYKMQLLSCIALTLALVANG). A glycan (O-linked (GalNAc...) threonine) is linked at T23. Cysteines 78 and 126 form a disulfide.

The protein belongs to the IL-2 family.

The protein localises to the secreted. In terms of biological role, cytokine produced by activated CD4-positive helper T-cells and to a lesser extend activated CD8-positive T-cells and natural killer (NK) cells that plays pivotal roles in the immune response and tolerance. Binds to a receptor complex composed of either the high-affinity trimeric IL-2R (IL2RA/CD25, IL2RB/CD122 and IL2RG/CD132) or the low-affinity dimeric IL-2R (IL2RB and IL2RG). Interaction with the receptor leads to oligomerization and conformation changes in the IL-2R subunits resulting in downstream signaling starting with phosphorylation of JAK1 and JAK3. In turn, JAK1 and JAK3 phosphorylate the receptor to form a docking site leading to the phosphorylation of several substrates including STAT5. This process leads to activation of several pathways including STAT, phosphoinositide-3-kinase/PI3K and mitogen-activated protein kinase/MAPK pathways. Functions as a T-cell growth factor and can increase NK-cell cytolytic activity as well. Promotes strong proliferation of activated B-cells and subsequently immunoglobulin production. Plays a pivotal role in regulating the adaptive immune system by controlling the survival and proliferation of regulatory T-cells, which are required for the maintenance of immune tolerance. Moreover, participates in the differentiation and homeostasis of effector T-cell subsets, including Th1, Th2, Th17 as well as memory CD8-positive T-cells. The sequence is that of Interleukin-2 (IL2) from Delphinapterus leucas (Beluga whale).